We begin with the raw amino-acid sequence, 403 residues long: Cytochrome P450 monooxygenase ustC (403 aa).

The signal sequence occupies residues 1-18 (MSPFIFAVTLTFAILALG). N-linked (GlcNAc...) asparagine glycosylation is found at N52 and N92. C318 contributes to the heme binding site.

The protein belongs to the cytochrome P450 family. The cofactor is heme.

It participates in mycotoxin biosynthesis. Cytochrome P450 monooxygenase; part of the gene cluster that mediates the biosynthesis of the secondary metabolite ustiloxin B, an antimitotic tetrapeptide. First, ustA is processed by the subtilisin-like endoprotease Kex2 that is outside the ustiloxin B gene cluster, at the C-terminal side of Arg-Lys, after transfer to Golgi apparatus through the endoplasmic reticulum (ER). Cleavage by KEX2 generates 16 peptides YAIG-I to YAIG-XVI. To process the precursor peptide further, at least two peptidases are necessary to cleave the N-terminal and C-terminal sides of the Tyr-Ala-Ile-Gly core peptide which serves as backbone for the synthesis of ustiloxin B, through cyclization and modification of the tyrosine with a non-protein coding amino acid, norvaline. One of the two peptidases must be the serine peptidase ustP; and the other pepdidase is probably ustH. Macrocyclization of the core peptide derived from ustA requires the tyrosinase ustQ, as well as the homologous oxidases ustYa and ustYb, and leads to the production of the first cyclization product N-desmethylustiloxin F. For the formation of N-desmethylustiloxin F, three oxidation steps are required, hydroxylation at the benzylic position, hydroxylation at either the aromatic ring of Tyr or beta-position of Ile, and oxidative cyclization. UstQ may catalyze the oxidation of a phenol moiety, whereas the ustYa and ustYb are most likely responsible for the remaining two-step oxidations. N-desmethylustiloxin F is then methylated by ustM to yield ustiloxin F which in turn substrate of the cytochrome P450 monooxygenase ustC which catalyzes the formation of S-deoxyustiloxin H. The flavoprotein monooxygenases ustF1 and ustF2 then participate in the modification of the side chain of S-deoxyustiloxin H, leading to the synthesis of an oxime intermediate, via ustiloxin H. Finally, carboxylative dehydration performed by the cysteine desulfurase-like protein ustD yields ustiloxin B. The chain is Cytochrome P450 monooxygenase ustC from Aspergillus flavus (strain ATCC 200026 / FGSC A1120 / IAM 13836 / NRRL 3357 / JCM 12722 / SRRC 167).